A 241-amino-acid chain; its full sequence is Uridylate kinase (241 aa).

15–18 is an ATP binding site; the sequence is KLSG. Residues 23-28 are involved in allosteric activation by GTP; sequence GTEGFG. A UMP-binding site is contributed by Gly57. ATP-binding residues include Gly58 and Arg62. UMP-binding positions include Asp77 and 138–145; that span reads TGNPFFTT. ATP-binding residues include Thr165, Phe171, and Asp174.

The protein belongs to the UMP kinase family. As to quaternary structure, homohexamer.

It is found in the cytoplasm. The enzyme catalyses UMP + ATP = UDP + ADP. Its pathway is pyrimidine metabolism; CTP biosynthesis via de novo pathway; UDP from UMP (UMPK route): step 1/1. With respect to regulation, allosterically activated by GTP. Inhibited by UTP. Catalyzes the reversible phosphorylation of UMP to UDP. This chain is Uridylate kinase, found in Escherichia coli O139:H28 (strain E24377A / ETEC).